The following is a 90-amino-acid chain: UPF0237 protein NMB1653 (90 aa).

The ACT domain maps to 5-83 (VITVIGKDRV…LDIRMQNEEI (79 aa)).

The protein belongs to the UPF0237 family.

This chain is UPF0237 protein NMB1653, found in Neisseria meningitidis serogroup B (strain ATCC BAA-335 / MC58).